A 62-amino-acid polypeptide reads, in one-letter code: Large ribosomal subunit protein bL28 (62 aa).

This sequence belongs to the bacterial ribosomal protein bL28 family.

The sequence is that of Large ribosomal subunit protein bL28 from Bacillus velezensis (strain DSM 23117 / BGSC 10A6 / LMG 26770 / FZB42) (Bacillus amyloliquefaciens subsp. plantarum).